Consider the following 249-residue polypeptide: Probable calcium-binding protein CML12 (249 aa).

Residues 1-24 (MQSQRERPREDRVHEETRGADHAH) show a composition bias toward basic and acidic residues. A disordered region spans residues 1–80 (MQSQRERPRE…RKGKAPATAE (80 aa)). Residues 30-56 (AAAAASATATETATRTMSLHAGGVVVV) show a composition bias toward low complexity. The span at 57–70 (DGKEKGKKEEGEGK) shows a compositional bias: basic and acidic residues. EF-hand domains lie at 91-126 (EQLR…LGLR), 128-163 (AAGD…LILG), 171-206 (VDQA…MGHP), and 207-242 (ICYA…SALD). Residues Asp-104, Asp-106, Asp-108, Ser-110, Glu-115, Asp-141, Asp-143, Asn-145, Thr-147, Glu-152, Asp-184, Asp-186, Asn-188, Glu-195, Asp-220, Asp-222, Asp-224, and Glu-231 each coordinate Ca(2+).

Its function is as follows. Potential calcium sensor. The polypeptide is Probable calcium-binding protein CML12 (CML12) (Oryza sativa subsp. japonica (Rice)).